The sequence spans 695 residues: Elongation factor G 1 (695 aa).

One can recognise a tr-type G domain in the interval 6 to 282; sequence STFRNIGISA…AITYYLPDPT (277 aa). GTP is bound by residues 15–22, 82–86, and 136–139; these read AHIDSGKT, DTPGH, and NKCD.

It belongs to the TRAFAC class translation factor GTPase superfamily. Classic translation factor GTPase family. EF-G/EF-2 subfamily.

The protein resides in the cytoplasm. Its function is as follows. Catalyzes the GTP-dependent ribosomal translocation step during translation elongation. During this step, the ribosome changes from the pre-translocational (PRE) to the post-translocational (POST) state as the newly formed A-site-bound peptidyl-tRNA and P-site-bound deacylated tRNA move to the P and E sites, respectively. Catalyzes the coordinated movement of the two tRNA molecules, the mRNA and conformational changes in the ribosome. This is Elongation factor G 1 (fusA) from Treponema pallidum (strain Nichols).